The following is a 461-amino-acid chain: Photosystem II CP43 reaction center protein (461 aa).

Residues 1–2 (ME) constitute a propeptide that is removed on maturation. Threonine 3 is subject to N-acetylthreonine. Threonine 3 is modified (phosphothreonine). 5 consecutive transmembrane segments (helical) span residues 57 to 81 (LFEV…PHLA), 122 to 143 (LLGP…KDRN), 166 to 188 (KALY…RKIT), 243 to 263 (KPFA…LSYS), and 279 to 300 (WFNN…ASQA). Glutamate 355 serves as a coordination point for [CaMn4O5] cluster. Residues 435–459 (RARAAAAGFEKGIDRDLEPVLSMTP) traverse the membrane as a helical segment.

Belongs to the PsbB/PsbC family. PsbC subfamily. In terms of assembly, PSII is composed of 1 copy each of membrane proteins PsbA, PsbB, PsbC, PsbD, PsbE, PsbF, PsbH, PsbI, PsbJ, PsbK, PsbL, PsbM, PsbT, PsbX, PsbY, PsbZ, Psb30/Ycf12, at least 3 peripheral proteins of the oxygen-evolving complex and a large number of cofactors. It forms dimeric complexes. Requires Binds multiple chlorophylls and provides some of the ligands for the Ca-4Mn-5O cluster of the oxygen-evolving complex. It may also provide a ligand for a Cl- that is required for oxygen evolution. PSII binds additional chlorophylls, carotenoids and specific lipids. as cofactor.

Its subcellular location is the plastid. The protein resides in the chloroplast thylakoid membrane. One of the components of the core complex of photosystem II (PSII). It binds chlorophyll and helps catalyze the primary light-induced photochemical processes of PSII. PSII is a light-driven water:plastoquinone oxidoreductase, using light energy to abstract electrons from H(2)O, generating O(2) and a proton gradient subsequently used for ATP formation. This chain is Photosystem II CP43 reaction center protein, found in Ceratophyllum demersum (Rigid hornwort).